Consider the following 273-residue polypeptide: MHEAQIRVAIVGAGGRMGRQLIQAALHMEGIQPGAALEREGSSLLGSDAGELAGVGKMGVIVQSDLALVKDDFDVLVDFTRPEGTLAHLAFCRKHGKSMVIGTTGFDEAGKQAIRDAAQEIAIVFAANFSVGVNVMLKLLEKTAKVMGDYSDIEIIEAHHRHKVDAPSGTALAMGETIAHALNKDLQDCAVYSREGHTGERVPGTIGFATVRAGDIIGEHTAMFADIGERVEITHKASSRMTFANGALRSALWLKTKKNGLFDMRDVLGLDVL.

NAD(+) is bound by residues 12 to 17 and Glu38; that span reads GAGGRM. NADP(+) is bound at residue Arg39. Residues 102 to 104 and 126 to 129 each bind NAD(+); these read GTT and AANF. The Proton donor/acceptor role is filled by His159. Position 160 (His160) interacts with (S)-2,3,4,5-tetrahydrodipicolinate. Lys163 acts as the Proton donor in catalysis. Residue 169-170 coordinates (S)-2,3,4,5-tetrahydrodipicolinate; sequence GT.

Belongs to the DapB family. In terms of assembly, homotetramer.

It localises to the cytoplasm. It carries out the reaction (S)-2,3,4,5-tetrahydrodipicolinate + NAD(+) + H2O = (2S,4S)-4-hydroxy-2,3,4,5-tetrahydrodipicolinate + NADH + H(+). The enzyme catalyses (S)-2,3,4,5-tetrahydrodipicolinate + NADP(+) + H2O = (2S,4S)-4-hydroxy-2,3,4,5-tetrahydrodipicolinate + NADPH + H(+). Its pathway is amino-acid biosynthesis; L-lysine biosynthesis via DAP pathway; (S)-tetrahydrodipicolinate from L-aspartate: step 4/4. Functionally, catalyzes the conversion of 4-hydroxy-tetrahydrodipicolinate (HTPA) to tetrahydrodipicolinate. In Salmonella arizonae (strain ATCC BAA-731 / CDC346-86 / RSK2980), this protein is 4-hydroxy-tetrahydrodipicolinate reductase.